Reading from the N-terminus, the 468-residue chain is 3-isopropylmalate dehydratase large subunit (468 aa).

Positions 349, 409, and 412 each coordinate [4Fe-4S] cluster.

The protein belongs to the aconitase/IPM isomerase family. LeuC type 1 subfamily. As to quaternary structure, heterodimer of LeuC and LeuD. The cofactor is [4Fe-4S] cluster.

It catalyses the reaction (2R,3S)-3-isopropylmalate = (2S)-2-isopropylmalate. It participates in amino-acid biosynthesis; L-leucine biosynthesis; L-leucine from 3-methyl-2-oxobutanoate: step 2/4. Its function is as follows. Catalyzes the isomerization between 2-isopropylmalate and 3-isopropylmalate, via the formation of 2-isopropylmaleate. The polypeptide is 3-isopropylmalate dehydratase large subunit (Shewanella baltica (strain OS155 / ATCC BAA-1091)).